Here is a 140-residue protein sequence, read N- to C-terminus: Protein PsiE homolog (140 aa).

4 helical membrane passes run 16-36 (IVLQYILNVALICLGVVLSVF), 57-77 (YHLIDSIVVFFLYFEFIVMII), 85-105 (HFPLRYFIYIGITAIVRLIII), and 110-130 (PLDLLLYACAIFVLISALFIA).

This sequence belongs to the PsiE family.

The protein localises to the cell membrane. The chain is Protein PsiE homolog from Bacillus cereus (strain ATCC 14579 / DSM 31 / CCUG 7414 / JCM 2152 / NBRC 15305 / NCIMB 9373 / NCTC 2599 / NRRL B-3711).